The following is a 92-amino-acid chain: Small ribosomal subunit protein uS19c (92 aa).

The protein belongs to the universal ribosomal protein uS19 family.

The protein resides in the plastid. It localises to the chloroplast. Protein S19 forms a complex with S13 that binds strongly to the 16S ribosomal RNA. In Anthoceros angustus (Hornwort), this protein is Small ribosomal subunit protein uS19c (rps19).